Consider the following 451-residue polypeptide: Homeobox protein meis3-B (451 aa).

The interval 33–64 is disordered; it reads HHSLSQSTPYGSTGAAHRVPMPPGMGSNDGLK. The segment covering 34 to 43 has biased composition (polar residues); sequence HSLSQSTPYG. The 84-residue stretch at 102-185 folds into the MEIS N-terminal domain; that stretch reads GGDVCSSDSF…PIDLVIDDRD (84 aa). The interval 206–272 is disordered; it reads NNTWIRDHDE…RDKKRNKKRG (67 aa). The segment covering 218 to 230 has biased composition (low complexity); that stretch reads STHSGTPGPSSGG. A compositionally biased stretch (polar residues) spans 231–242; it reads LASQSGDNSSEQ. Positions 267–329 form a DNA-binding region, homeobox; that stretch reads RNKKRGIFPK…NARRRIVQPM (63 aa).

It belongs to the TALE/MEIS homeobox family.

It is found in the nucleus. Its function is as follows. A caudalizing protein which is required to pattern the anterior/posterior (A/P) axis during central nervous system (CNS) formation. Inhibits anterior neural expression and acts as a transcriptional activator to induce posterior neural gene expression. Maintains a proper A/P balance required for hindbrain formation by activating the FGF/MAPK pathway, which modulates the planar cell polarity (PCP) pathway. Interacts with retinoid signaling during hindbrain patterning. This chain is Homeobox protein meis3-B (meis3-b), found in Xenopus laevis (African clawed frog).